Here is a 450-residue protein sequence, read N- to C-terminus: SAGA complex/transcription factor TFIID complex subunit Taf12 (450 aa).

3 stretches are compositionally biased toward polar residues: residues 1–10 (MNGQHSSPGT), 19–29 (PVNQAQFSQQR), and 190–212 (QNRQ…NAST). Disordered stretches follow at residues 1–29 (MNGQ…SQQR) and 190–281 (QNRQ…VEKS). The span at 217–236 (STASTPQLQQTQAQANAPQQ) shows a compositional bias: low complexity. 2 stretches are compositionally biased toward polar residues: residues 237–246 (RINPETSSVP) and 255–281 (ANVS…VEKS). Ser297 is subject to Phosphoserine. Positions 338–413 (NGNRLLSKRK…HLERNWNIRL (76 aa)) constitute a Histone-fold domain. The interval 426-450 (RKTGPTPSYQQKQNAIGTAKSLNKD) is disordered. The segment covering 430–441 (PTPSYQQKQNAI) has biased composition (polar residues).

This sequence belongs to the TAF12 family. As to quaternary structure, component of the 1.8 MDa SAGA (Spt-Ada-Gcn5 acetyltransferase) complex, which is composed of 19 subunits tra1, spt7, taf5, ngg1/ada3, sgf73, spt20, spt8, taf12, taf6, hfi1/ada1, ubp8, gcn5, ada2, spt3, sgf29, taf10, taf9, sgf11 and sus1. The SAGA complex is composed of 4 modules, namely the HAT (histone acetyltransferase) module (gcn5, ada2, ngg1/ada3 and sgf29), the DUB (deubiquitinating) module (ubp8, sgf11, sgf73 and sus1), the core or TAF (TBP-associated factor) module (taf5, taf6, taf9, taf10 and taf12), and the Tra1 or SPT (Suppressor of Ty) module (tra1, hfi1/ada1, spt3, spt7, spt8 and spt20). The Tra1/SPT module binds activators, the core module recruits TBP (TATA-binding protein), the HAT module contains the histone H3 acetyltransferase gcn5, and the DUB module comprises the histone H2B deubiquitinase ubp8. Component of the 1.2 MDa TFIID complex, which is composed of TATA-binding protein (TBP) and the 14 TBP-associated factors (TAFs). It comprises 1 copy of each taf1, taf2, taf3, taf7, taf8, taf11, taf13, 2 copies of each taf4, taf5, taf6, taf9, taf10, taf12, and 3 copies of taf14. In TFIID, taf12 heterodimerizes with taf4, forming ultimately an octamer consisting of a taf6-taf9 heterotetramer core flanked by taf4-taf12 dimers on either side, similar to the histone H2A-H2B-H3-H4 octamer.

The protein localises to the nucleus. In terms of biological role, functions as a component of both the DNA-binding general transcription initiation factor complex TFIID and the transcription coactivator SAGA complex. Binding of TFIID to a promoter (with or without TATA element) is the initial step in pre-initiation complex (PIC) formation. TFIID plays a key role in the regulation of gene expression by RNA polymerase II through different activities such as transcription activator interaction, core promoter recognition and selectivity, TFIIA and TFIIB interaction, chromatin modification (histone acetylation by TAF1), facilitation of DNA opening and initiation of transcription. SAGA acts as a general cofactor required for essentially all RNA polymerase II transcription. At the promoters, SAGA is required for transcription pre-initiation complex (PIC) recruitment. It influences RNA polymerase II transcriptional activity through different activities such as TBP interaction (via core/TAF module) and promoter selectivity, interaction with transcription activators (via Tra1/SPT module), and chromatin modification through histone acetylation (via HAT module) and deubiquitination (via DUB module). SAGA preferentially acetylates histones H3 (to form H3K9ac, H3K14ac, H3K18ac and H3K23ac) and H2B and deubiquitinates histone H2B. SAGA interacts with DNA via upstream activating sequences (UASs). The polypeptide is SAGA complex/transcription factor TFIID complex subunit Taf12 (Schizosaccharomyces pombe (strain 972 / ATCC 24843) (Fission yeast)).